The following is a 123-amino-acid chain: Large ribosomal subunit protein uL24 (123 aa).

It belongs to the universal ribosomal protein uL24 family. Part of the 50S ribosomal subunit.

One of two assembly initiator proteins, it binds directly to the 5'-end of the 23S rRNA, where it nucleates assembly of the 50S subunit. In terms of biological role, one of the proteins that surrounds the polypeptide exit tunnel on the outside of the subunit. In Solibacter usitatus (strain Ellin6076), this protein is Large ribosomal subunit protein uL24.